Consider the following 371-residue polypeptide: O-antigen chain mannosyltransferase C (371 aa).

This sequence belongs to the glycosyltransferase group 1 family. Glycosyltransferase 4 subfamily.

It carries out the reaction N-acetyl-alpha-D-glucosaminyl-di-trans,octa-cis-undecaprenyl diphosphate + GDP-alpha-D-mannose = alpha-D-mannosyl-(1-&gt;3)-N-acetyl-alpha-D-glucosaminyl-di-trans,octa-cis-undecaprenyl diphosphate + GDP + H(+). Its pathway is bacterial outer membrane biogenesis; LPS O-antigen biosynthesis. Mannosyltransferase involved in the biosynthesis of the repeat unit of the lipopolysaccharide (LPS) O-antigen region. Catalyzes the transfer of a single alpha-(1-&gt;3)-linked mannose residue to the acceptor N-acetyl-glucosaminyl-diphospho-undecaprenol during the synthesis of the adapter region. The sequence is that of O-antigen chain mannosyltransferase C from Escherichia coli.